The chain runs to 131 residues: Hypocretin neuropeptide precursor (131 aa).

The N-terminal stretch at 1 to 33 (MNLPSTKVSWAAVTLLLLLLLLPPALLSSGAAA) is a signal peptide. Q34 bears the Pyrrolidone carboxylic acid mark. Intrachain disulfides connect C39–C45 and C40–C47. L66 bears the Leucine amide mark. M97 carries the methionine amide modification. A propeptide spans 98–131 (GRRAGAEPAPRPCLGRRCSAPAAASVAPGGQSGI) (removed in mature form).

The protein belongs to the orexin family. Post-translationally, specific enzymatic cleavages at paired basic residues yield the different active peptides. As to expression, abundantly expressed in subthalamic nucleus but undetectable in other brain regions tested (hypothalamus was not tested) and in heart, placenta, lung, liver, skeletal muscle, kidney and pancreas.

Its subcellular location is the rough endoplasmic reticulum. It is found in the cytoplasmic vesicle. The protein resides in the synapse. In terms of biological role, neuropeptides that play a significant role in the regulation of food intake and sleep-wakefulness, possibly by coordinating the complex behavioral and physiologic responses of these complementary homeostatic functions. A broader role in the homeostatic regulation of energy metabolism, autonomic function, hormonal balance and the regulation of body fluids, is also suggested. Its function is as follows. Binds to orexin receptors HCRTR1/OX1R and HCRTR2/OX2R with a high affinity. Stimulates food intake. Modulates pituitary luteinizing hormone secretion in an ovarian steroid-dependent manner. Binds to orexin receptor HCRTR2/OX2R only. Stimulates food intake. Modulates pituitary luteinizing hormone secretion in an ovarian steroid-dependent manner. The sequence is that of Hypocretin neuropeptide precursor from Homo sapiens (Human).